A 552-amino-acid chain; its full sequence is Putative transport protein HAPS_0158 (552 aa).

Transmembrane regions (helical) follow at residues 4–24 (IALTVSLLSLVAVIGLWIGHI), 28–48 (GVSLGIGGVLFGGILVSHFMT), 65–85 (FGLILFVYTIGIQVGPGFFAS), 95–115 (AFAVMIVGISGILVILLHKIF), and 157–177 (MGYAIAYPFGIIGILLAMWLI). 2 consecutive RCK C-terminal domains span residues 193-275 (DSAT…ILGE) and 277-360 (VNVS…IIGN). The next 6 membrane-spanning stretches (helical) occupy residues 370–390 (MLPIFIGVGLGVLLGSIPIYL), 393–413 (FPVALKLGLAGGPLVVALILA), 438–458 (IVLFLAVVGWKAGGNFLNTLL), 463–483 (LAWIGYGAIITFVPLIVTGLV), 492–512 (YLSLCGLLAGSMTDPPALAFA), and 532–552 (LVMFCRIILPQILAILLWVAG).

This sequence belongs to the AAE transporter (TC 2.A.81) family. YidE subfamily.

It is found in the cell membrane. This is Putative transport protein HAPS_0158 from Glaesserella parasuis serovar 5 (strain SH0165) (Haemophilus parasuis).